Consider the following 351-residue polypeptide: Probable NADP-dependent isopropanol dehydrogenase (351 aa).

Zn(2+)-binding residues include Cys-37, His-59, Glu-60, and Asp-150. NADP(+) contacts are provided by residues 175–178 (AGPV), 198–200 (DSR), 265–267 (VNY), and Lys-340.

This sequence belongs to the zinc-containing alcohol dehydrogenase family. Zn(2+) is required as a cofactor.

The catalysed reaction is propan-2-ol + NADP(+) = acetone + NADPH + H(+). In terms of biological role, alcohol dehydrogenase with a preference for medium chain secondary alcohols, such as 2-butanol and isopropanol. Has very low activity with primary alcohols, such as ethanol. Under physiological conditions, the enzyme reduces aldehydes and 2-ketones to produce secondary alcohols. Is also active with acetaldehyde and propionaldehyde. The protein is Probable NADP-dependent isopropanol dehydrogenase (adh) of Mycoplasma pneumoniae (strain ATCC 29342 / M129 / Subtype 1) (Mycoplasmoides pneumoniae).